We begin with the raw amino-acid sequence, 619 residues long: Frizzled and smoothened-like protein L (619 aa).

The first 24 residues, 1–24 (MITNKSKYYFFLILIFINFYLINC), serve as a signal peptide directing secretion. Asparagine 4, asparagine 63, asparagine 112, asparagine 143, asparagine 159, asparagine 184, and asparagine 203 each carry an N-linked (GlcNAc...) asparagine glycan. Residues 25–245 (QEEYPIDQTG…KQWDRLYDLS (221 aa)) lie on the Extracellular side of the membrane. An FZ domain is found at 31 to 169 (DQTGKCEPYI…YSIYDLSLVN (139 aa)). Intrachain disulfides connect cysteine 36/cysteine 106 and cysteine 48/cysteine 99. A helical membrane pass occupies residues 246–266 (NSLSVLSCVGTLFLLFTFNIL). Residues 267-278 (NKKINRFDRMNS) lie on the Cytoplasmic side of the membrane. The helical transmembrane segment at 279 to 299 (LFNGSVFMMSLSGVIILFAGG) threads the bilayer. The Extracellular portion of the chain corresponds to 300–321 (PRALIKDGGARISVWQDPLCSA). A helical transmembrane segment spans residues 322–342 (TGFIFQLFSIAAILFWVVMSF). Topologically, residues 343-358 (ELWYKIKFMTKKLDLK) are cytoplasmic. Residues 359–379 (KYYIPFIIIVSLVFSIIPLAT) form a helical membrane-spanning segment. The Extracellular segment spans residues 380–402 (KNYRMIRGNMHCWVHTTKLQNSL). The chain crosses the membrane as a helical span at residues 403 to 423 (FWIPLGIAITIGTIFIGLVMF). Topologically, residues 424–444 (EIHRIVSANSKGGVLKLEIKS) are cytoplasmic. The chain crosses the membrane as a helical span at residues 445 to 465 (ILNVALIYLTFIYLFAFNFYM). The Extracellular segment spans residues 466-497 (NGQEGVVYGQIESFYQCTLENDASECTIQGPS). A helical membrane pass occupies residues 498–518 (IGSLGFFIFCIRIYGVYCFIL). Residues 519–619 (QGLNYRAYNI…TLKDIEVSKS (101 aa)) lie on the Cytoplasmic side of the membrane. The tract at residues 581-605 (LNIDSAFSKNNESDDEDDYDPYKKS) is disordered.

This sequence belongs to the G-protein coupled receptor Fz/Smo family.

It is found in the membrane. This Dictyostelium discoideum (Social amoeba) protein is Frizzled and smoothened-like protein L (fslL).